A 179-amino-acid polypeptide reads, in one-letter code: Large ribosomal subunit protein uL6 (179 aa).

This sequence belongs to the universal ribosomal protein uL6 family. As to quaternary structure, part of the 50S ribosomal subunit.

Functionally, this protein binds to the 23S rRNA, and is important in its secondary structure. It is located near the subunit interface in the base of the L7/L12 stalk, and near the tRNA binding site of the peptidyltransferase center. In Geobacter sulfurreducens (strain ATCC 51573 / DSM 12127 / PCA), this protein is Large ribosomal subunit protein uL6.